Consider the following 161-residue polypeptide: Ribonuclease P protein component (161 aa).

It belongs to the RnpA family. Consists of a catalytic RNA component (M1 or rnpB) and a protein subunit.

It carries out the reaction Endonucleolytic cleavage of RNA, removing 5'-extranucleotides from tRNA precursor.. In terms of biological role, RNaseP catalyzes the removal of the 5'-leader sequence from pre-tRNA to produce the mature 5'-terminus. It can also cleave other RNA substrates such as 4.5S RNA. The protein component plays an auxiliary but essential role in vivo by binding to the 5'-leader sequence and broadening the substrate specificity of the ribozyme. This is Ribonuclease P protein component from Helicobacter pylori (strain J99 / ATCC 700824) (Campylobacter pylori J99).